Reading from the N-terminus, the 202-residue chain is D-alanyl-D-alanine dipeptidase (202 aa).

2 residues coordinate Zn(2+): H116 and D123. E181 functions as the Proton donor/acceptor in the catalytic mechanism. H184 contacts Zn(2+).

Belongs to the peptidase M15D family. The cofactor is Zn(2+).

It catalyses the reaction D-alanyl-D-alanine + H2O = 2 D-alanine. Functionally, catalyzes hydrolysis of the D-alanyl-D-alanine dipeptide. May play a role in immunity or defense against glycopeptide antibiotics (perhaps at a moderate level) in the soil environment. Might confer vancomycin resistance to S.coelicolor. This chain is D-alanyl-D-alanine dipeptidase (vanX), found in Streptomyces coelicolor (strain ATCC BAA-471 / A3(2) / M145).